The following is a 474-amino-acid chain: tRNA-2-methylthio-N(6)-dimethylallyladenosine synthase (474 aa).

Positions 3 to 120 (KKLLIKTWGC…LPEMIKQSQS (118 aa)) constitute an MTTase N-terminal domain. [4Fe-4S] cluster-binding residues include Cys-12, Cys-49, Cys-83, Cys-157, Cys-161, and Cys-164. One can recognise a Radical SAM core domain in the interval 143–375 (RAEGATAFVS…QQTVNTQAMR (233 aa)). Residues 378 to 441 (RQMLDTEQRV…ANSLRGELVR (64 aa)) enclose the TRAM domain.

It belongs to the methylthiotransferase family. MiaB subfamily. In terms of assembly, monomer. Requires [4Fe-4S] cluster as cofactor.

It is found in the cytoplasm. The catalysed reaction is N(6)-dimethylallyladenosine(37) in tRNA + (sulfur carrier)-SH + AH2 + 2 S-adenosyl-L-methionine = 2-methylsulfanyl-N(6)-dimethylallyladenosine(37) in tRNA + (sulfur carrier)-H + 5'-deoxyadenosine + L-methionine + A + S-adenosyl-L-homocysteine + 2 H(+). Its function is as follows. Catalyzes the methylthiolation of N6-(dimethylallyl)adenosine (i(6)A), leading to the formation of 2-methylthio-N6-(dimethylallyl)adenosine (ms(2)i(6)A) at position 37 in tRNAs that read codons beginning with uridine. The sequence is that of tRNA-2-methylthio-N(6)-dimethylallyladenosine synthase from Vibrio campbellii (strain ATCC BAA-1116).